The sequence spans 179 residues: GTP-dependent dephospho-CoA kinase (179 aa).

Residues D50, V51, V52, D69, K71, and E126 each coordinate GTP.

It belongs to the GTP-dependent DPCK family.

The catalysed reaction is 3'-dephospho-CoA + GTP = GDP + CoA + H(+). Its pathway is cofactor biosynthesis; coenzyme A biosynthesis. Its function is as follows. Catalyzes the GTP-dependent phosphorylation of the 3'-hydroxyl group of dephosphocoenzyme A to form coenzyme A (CoA). This chain is GTP-dependent dephospho-CoA kinase, found in Pyrococcus horikoshii (strain ATCC 700860 / DSM 12428 / JCM 9974 / NBRC 100139 / OT-3).